The chain runs to 488 residues: Aspartyl/glutamyl-tRNA(Asn/Gln) amidotransferase subunit B (488 aa).

This sequence belongs to the GatB/GatE family. GatB subfamily. Heterotrimer of A, B and C subunits.

It carries out the reaction L-glutamyl-tRNA(Gln) + L-glutamine + ATP + H2O = L-glutaminyl-tRNA(Gln) + L-glutamate + ADP + phosphate + H(+). The catalysed reaction is L-aspartyl-tRNA(Asn) + L-glutamine + ATP + H2O = L-asparaginyl-tRNA(Asn) + L-glutamate + ADP + phosphate + 2 H(+). Its function is as follows. Allows the formation of correctly charged Asn-tRNA(Asn) or Gln-tRNA(Gln) through the transamidation of misacylated Asp-tRNA(Asn) or Glu-tRNA(Gln) in organisms which lack either or both of asparaginyl-tRNA or glutaminyl-tRNA synthetases. The reaction takes place in the presence of glutamine and ATP through an activated phospho-Asp-tRNA(Asn) or phospho-Glu-tRNA(Gln). The polypeptide is Aspartyl/glutamyl-tRNA(Asn/Gln) amidotransferase subunit B (Chlamydia trachomatis serovar L2 (strain ATCC VR-902B / DSM 19102 / 434/Bu)).